The sequence spans 120 residues: MIKGHGIDIEELVAIERAYLKNARFAKKVLTEAELSRFEELSGKRKIEFLAGRWAAKEAFSKAWGTGIGKLRFQDLEILNDRQGAPYFSRSPFTGKVWISLSHAAGLVTASVILEENDES.

Asp8 and Glu58 together coordinate Mg(2+).

The protein belongs to the P-Pant transferase superfamily. AcpS family. The cofactor is Mg(2+).

It localises to the cytoplasm. The catalysed reaction is apo-[ACP] + CoA = holo-[ACP] + adenosine 3',5'-bisphosphate + H(+). Functionally, transfers the 4'-phosphopantetheine moiety from coenzyme A to a Ser of acyl-carrier-protein. The protein is Holo-[acyl-carrier-protein] synthase of Streptococcus sanguinis (strain SK36).